We begin with the raw amino-acid sequence, 142 residues long: Large ribosomal subunit protein uL13 (142 aa).

Belongs to the universal ribosomal protein uL13 family. As to quaternary structure, part of the 50S ribosomal subunit.

In terms of biological role, this protein is one of the early assembly proteins of the 50S ribosomal subunit, although it is not seen to bind rRNA by itself. It is important during the early stages of 50S assembly. This Glaesserella parasuis serovar 5 (strain SH0165) (Haemophilus parasuis) protein is Large ribosomal subunit protein uL13.